Consider the following 567-residue polypeptide: Eukaryotic translation initiation factor 3 subunit D (567 aa).

2 disordered regions span residues 12-34 (PVKSAWGPPETEQIGGDIPYAPF) and 122-160 (GQNVQRGGRGGRYGSSGGRGAGDTVVSRSSGAGGARGRR). Residues 128 to 142 (GGRGGRYGSSGGRGA) are compositionally biased toward gly residues. The segment at 300–314 (PFDYLTVNENAYDSP) is RNA gate.

The protein belongs to the eIF-3 subunit D family. Component of the eukaryotic translation initiation factor 3 (eIF-3) complex. The eIF-3 complex appears to include tif32/eif3a, SPAC25G10.08/eif3b, tif33/eif3c, SPBC4C3.07/eif3f, tif35/eif3g and sum1/eif3i. This set of common subunits may also associate exclusively with either moe1/eif3d and int6/eif3e, or with SPAC821.05/eif3h and SPAC1751.03/eif3m. The eIF-3 complex may also include SPAC3A12.13c/eif3j.

It is found in the cytoplasm. MRNA cap-binding component of the eukaryotic translation initiation factor 3 (eIF-3) complex, which is involved in protein synthesis of a specialized repertoire of mRNAs and, together with other initiation factors, stimulates binding of mRNA and methionyl-tRNAi to the 40S ribosome. The eIF-3 complex specifically targets and initiates translation of a subset of mRNAs involved in cell proliferation. In the eIF-3 complex, eif3d specifically recognizes and binds the 7-methylguanosine cap of a subset of mRNAs. The protein is Eukaryotic translation initiation factor 3 subunit D (moe1) of Schizosaccharomyces pombe (strain 972 / ATCC 24843) (Fission yeast).